Consider the following 76-residue polypeptide: Acyl carrier protein (76 aa).

A Carrier domain is found at 1–76; the sequence is MATFDDVKDV…AAIDYIESKQ (76 aa). Position 36 is an O-(pantetheine 4'-phosphoryl)serine (Ser36).

Belongs to the acyl carrier protein (ACP) family. Post-translationally, 4'-phosphopantetheine is transferred from CoA to a specific serine of apo-ACP by AcpS. This modification is essential for activity because fatty acids are bound in thioester linkage to the sulfhydryl of the prosthetic group.

It is found in the cytoplasm. Its pathway is lipid metabolism; fatty acid biosynthesis. Carrier of the growing fatty acid chain in fatty acid biosynthesis. This is Acyl carrier protein from Deinococcus deserti (strain DSM 17065 / CIP 109153 / LMG 22923 / VCD115).